We begin with the raw amino-acid sequence, 159 residues long: SsrA-binding protein (159 aa).

The interval 134-159 (KEHDKRDTERDRDWSRDKERLMKHNA) is disordered.

Belongs to the SmpB family.

The protein localises to the cytoplasm. In terms of biological role, required for rescue of stalled ribosomes mediated by trans-translation. Binds to transfer-messenger RNA (tmRNA), required for stable association of tmRNA with ribosomes. tmRNA and SmpB together mimic tRNA shape, replacing the anticodon stem-loop with SmpB. tmRNA is encoded by the ssrA gene; the 2 termini fold to resemble tRNA(Ala) and it encodes a 'tag peptide', a short internal open reading frame. During trans-translation Ala-aminoacylated tmRNA acts like a tRNA, entering the A-site of stalled ribosomes, displacing the stalled mRNA. The ribosome then switches to translate the ORF on the tmRNA; the nascent peptide is terminated with the 'tag peptide' encoded by the tmRNA and targeted for degradation. The ribosome is freed to recommence translation, which seems to be the essential function of trans-translation. In Marinomonas sp. (strain MWYL1), this protein is SsrA-binding protein.